Consider the following 151-residue polypeptide: Putative esterase VNG_1336C (151 aa).

It belongs to the thioesterase PaaI family.

This is Putative esterase VNG_1336C from Halobacterium salinarum (strain ATCC 700922 / JCM 11081 / NRC-1) (Halobacterium halobium).